The primary structure comprises 771 residues: Leucine-rich repeat and fibronectin type III domain-containing protein 1 (771 aa).

The N-terminal stretch at 1–31 (MAPGPFSSALLSPPPAALPFLLLLWAGASRG) is a signal peptide. One can recognise an LRRNT domain in the interval 32-65 (QPCPGRCICQNVAPTLTMLCAKTGLLFVPPAIDR). Residues 32–536 (QPCPGRCICQ…LRAHFLGGTM (505 aa)) lie on the Extracellular side of the membrane. LRR repeat units lie at residues 66-87 (RVVE…DFAN), 90-111 (SLVH…AFAD), 114-135 (ALRA…QLRG), 138-159 (NLRH…AFDA), 163-184 (TVED…AVGQ), 187-208 (NLNT…TFVQ), and 211-232 (KLVR…GLFL). The N-linked (GlcNAc...) asparagine glycan is linked to N87. The region spanning 252-298 (NPLHCNCELLWLRRLTREDDLETCATPEHLTDRYFWSIPEEEFLCEP) is the LRRCT domain. The region spanning 299 to 386 (PLITRQAGGR…GEATAPVEVC (88 aa)) is the Ig-like domain. A disulfide bridge links C321 with C370. N343 carries an N-linked (GlcNAc...) asparagine glycan. The segment at 397 to 422 (PAAPPPLTEPGSSDIATPGRPGANDS) is disordered. Residues 424-520 (AERRLVAAEL…GCVQFTTAGD (97 aa)) form the Fibronectin type-III domain. The helical transmembrane segment at 537 to 557 (IIAIGGVIVASVLVFIVLLMI) threads the bilayer. Residues 558-771 (RYKVYGDGDS…STEWMLESTV (214 aa)) are Cytoplasmic-facing. Phosphoserine occurs at positions 613 and 718. The interval 654–743 (PSEETSGEES…HLDGAGGGAA (90 aa)) is disordered. A compositionally biased stretch (basic residues) spans 719 to 732 (YPRRARRTKRHRST). The PDZ-binding signature appears at 768-771 (ESTV).

This sequence belongs to the LRFN family. As to quaternary structure, can form heteromeric complexes with LRFN2, LRFN3, LRFN4 and LRFN5. Forms homomeric complexes, but not across cell junctions. Interacts with DLG1, DLG2, DLG3 and DLG4. Interacts with 2 AMPA receptor subunits GRIA1 and GRIA2 and NMDA receptor subunit GRIN1. Glycosylated.

The protein resides in the membrane. The protein localises to the synapse. It localises to the postsynaptic density membrane. Its function is as follows. Promotes neurite outgrowth in hippocampal neurons. Involved in the regulation and maintenance of excitatory synapses. Induces the clustering of excitatory postsynaptic proteins, including DLG4, DLGAP1, GRIA1 and GRIN1. This chain is Leucine-rich repeat and fibronectin type III domain-containing protein 1 (LRFN1), found in Homo sapiens (Human).